The primary structure comprises 918 residues: Calcium-transporting ATPase type 2C member 1 (918 aa).

The Cytoplasmic segment spans residues 1–75 (MKVARFQKIP…SEDEPLWKKY (75 aa)). A helical transmembrane segment spans residues 76–96 (ISQFKNPLIMLLLASAVISVL). Residues 97 to 98 (MH) lie on the Extracellular side of the membrane. A helical membrane pass occupies residues 99–119 (QFDDAVSITVAILIVVTVAFV). The Cytoplasmic segment spans residues 120–267 (QEYRSEKSLE…LQKSMDLLGK (148 aa)). Residues 268-288 (QLSFYSFGIIGIIMLVGWLLG) traverse the membrane as a helical segment. Topologically, residues 289–302 (KDILEMFTISVSLA) are extracellular. A helical transmembrane segment spans residues 303–323 (VAAIPEGLPIVVTVTLALGVM). Residues 324–703 (RMVKKRAIVK…IYNNIKNFVR (380 aa)) are Cytoplasmic-facing. The active-site 4-aspartylphosphate intermediate is the Asp350. Asp643 and Asp647 together coordinate Mg(2+). The helical transmembrane segment at 704-724 (FQLSTSIAALTLISLATLMNF) threads the bilayer. At 725–732 (PNPLNAMQ) the chain is on the extracellular side. The chain crosses the membrane as a helical span at residues 733 to 753 (ILWINIIMDGPPAQSLGVEPV). Residues 754 to 773 (DKDVIRKPPRNWKDSILTKN) are Cytoplasmic-facing. A helical membrane pass occupies residues 774-794 (LILKILVSSIIIVCGTLFVFW). The Extracellular segment spans residues 795–842 (RELRDNVITPRDTTMTFTCFVFFDMFNALSSRSQTKSVFEIGLCSNKM). Residues 843–863 (FCYAVLGSIMGQLLVIYFPPL) form a helical membrane-spanning segment. The Cytoplasmic portion of the chain corresponds to 864–873 (QKVFQTESLS). A helical transmembrane segment spans residues 874–894 (ILDLLFLLGLTSSVCIVAEII). Over 895–918 (KKVERSREKIQKHVSSTSSSFLEV) the chain is Extracellular.

This sequence belongs to the cation transport ATPase (P-type) (TC 3.A.3) family. Type IIA subfamily. Monomer. Homodimer.

It localises to the golgi apparatus. The protein localises to the trans-Golgi network membrane. It is found in the golgi stack membrane. It catalyses the reaction Ca(2+)(in) + ATP + H2O = Ca(2+)(out) + ADP + phosphate + H(+). The enzyme catalyses Mn(2+)(in) + ATP + H2O = Mn(2+)(out) + ADP + phosphate + H(+). Functionally, ATP-driven pump that supplies the Golgi apparatus with Ca(2+) and Mn(2+) ions, both essential cofactors for processing and trafficking of newly synthesized proteins in the secretory pathway. Within a catalytic cycle, acquires Ca(2+) or Mn(2+) ions on the cytoplasmic side of the membrane and delivers them to the lumenal side. The transfer of ions across the membrane is coupled to ATP hydrolysis and is associated with a transient phosphorylation that shifts the pump conformation from inward-facing to outward-facing state. Plays a primary role in the maintenance of Ca(2+) homeostasis in the trans-Golgi compartment with a functional impact on Golgi and post-Golgi protein sorting as well as a structural impact on cisternae morphology. Responsible for loading the Golgi stores with Ca(2+) ions in keratinocytes, contributing to keratinocyte differentiation and epidermis integrity. Participates in Ca(2+) and Mn(2+) ions uptake into the Golgi store of hippocampal neurons and regulates protein trafficking required for neural polarity. May also play a role in the maintenance of Ca(2+) and Mn(2+) homeostasis and signaling in the cytosol while preventing cytotoxicity. The chain is Calcium-transporting ATPase type 2C member 1 (ATP2C1) from Pongo abelii (Sumatran orangutan).